We begin with the raw amino-acid sequence, 115 residues long: Large ribosomal subunit protein bL19 (115 aa).

The protein belongs to the bacterial ribosomal protein bL19 family.

In terms of biological role, this protein is located at the 30S-50S ribosomal subunit interface and may play a role in the structure and function of the aminoacyl-tRNA binding site. The polypeptide is Large ribosomal subunit protein bL19 (Bacillus licheniformis (strain ATCC 14580 / DSM 13 / JCM 2505 / CCUG 7422 / NBRC 12200 / NCIMB 9375 / NCTC 10341 / NRRL NRS-1264 / Gibson 46)).